The chain runs to 211 residues: Protein-L-isoaspartate O-methyltransferase 2 (211 aa).

Serine 61 is an active-site residue.

Belongs to the methyltransferase superfamily. L-isoaspartyl/D-aspartyl protein methyltransferase family.

The protein resides in the cytoplasm. The enzyme catalyses [protein]-L-isoaspartate + S-adenosyl-L-methionine = [protein]-L-isoaspartate alpha-methyl ester + S-adenosyl-L-homocysteine. Catalyzes the methyl esterification of L-isoaspartyl residues in peptides and proteins that result from spontaneous decomposition of normal L-aspartyl and L-asparaginyl residues. It plays a role in the repair and/or degradation of damaged proteins. This chain is Protein-L-isoaspartate O-methyltransferase 2, found in Polaromonas sp. (strain JS666 / ATCC BAA-500).